A 200-amino-acid chain; its full sequence is Putative peroxiredoxin sll0755 (200 aa).

Positions 5-163 constitute a Thioredoxin domain; sequence LRVGQPAPDF…TLRVLKAIRH (159 aa). C50 functions as the Cysteine sulfenic acid (-SOH) intermediate in the catalytic mechanism.

This sequence belongs to the peroxiredoxin family. AhpC/Prx1 subfamily. In terms of assembly, homodimer; disulfide-linked, upon oxidation.

The protein localises to the cytoplasm. The catalysed reaction is a hydroperoxide + [thioredoxin]-dithiol = an alcohol + [thioredoxin]-disulfide + H2O. Thiol-specific peroxidase that catalyzes the reduction of hydrogen peroxide and organic hydroperoxides to water and alcohols, respectively. Plays a role in cell protection against oxidative stress by detoxifying peroxides. The protein is Putative peroxiredoxin sll0755 of Synechocystis sp. (strain ATCC 27184 / PCC 6803 / Kazusa).